Reading from the N-terminus, the 505-residue chain is T-cell activation inhibitor, mitochondrial (505 aa).

Residues 216 to 243 (LKNSLPLRKELDRLKNELSELLQLSDIR) are a coiled coil.

In terms of tissue distribution, expressed in peripheral blood leukocytes, mainly in T-lymphocytes.

Its subcellular location is the mitochondrion. In terms of biological role, may regulate T-cell apoptosis. The chain is T-cell activation inhibitor, mitochondrial (Tcaim) from Rattus norvegicus (Rat).